Consider the following 300-residue polypeptide: Ornithine carbamoyltransferase (300 aa).

Residues 50 to 53 (STRT), Gln-77, Arg-101, and 128 to 131 (HPCQ) each bind carbamoyl phosphate. L-ornithine is bound by residues Asn-159, Asp-219, and 223–224 (SM). Residues 257-258 (CL) and Arg-285 each bind carbamoyl phosphate.

This sequence belongs to the aspartate/ornithine carbamoyltransferase superfamily. OTCase family.

The protein localises to the cytoplasm. The enzyme catalyses carbamoyl phosphate + L-ornithine = L-citrulline + phosphate + H(+). The protein operates within amino-acid degradation; L-arginine degradation via ADI pathway; carbamoyl phosphate from L-arginine: step 2/2. In terms of biological role, reversibly catalyzes the transfer of the carbamoyl group from carbamoyl phosphate (CP) to the N(epsilon) atom of ornithine (ORN) to produce L-citrulline. This chain is Ornithine carbamoyltransferase, found in Haloquadratum walsbyi (strain DSM 16790 / HBSQ001).